The following is a 156-amino-acid chain: ATP synthase subunit b (156 aa).

A helical transmembrane segment spans residues 11–31 (AIAFVIFVWFCMKYVWPPLMA).

Belongs to the ATPase B chain family. F-type ATPases have 2 components, F(1) - the catalytic core - and F(0) - the membrane proton channel. F(1) has five subunits: alpha(3), beta(3), gamma(1), delta(1), epsilon(1). F(0) has three main subunits: a(1), b(2) and c(10-14). The alpha and beta chains form an alternating ring which encloses part of the gamma chain. F(1) is attached to F(0) by a central stalk formed by the gamma and epsilon chains, while a peripheral stalk is formed by the delta and b chains.

The protein localises to the cell inner membrane. F(1)F(0) ATP synthase produces ATP from ADP in the presence of a proton or sodium gradient. F-type ATPases consist of two structural domains, F(1) containing the extramembraneous catalytic core and F(0) containing the membrane proton channel, linked together by a central stalk and a peripheral stalk. During catalysis, ATP synthesis in the catalytic domain of F(1) is coupled via a rotary mechanism of the central stalk subunits to proton translocation. Functionally, component of the F(0) channel, it forms part of the peripheral stalk, linking F(1) to F(0). This is ATP synthase subunit b from Klebsiella pneumoniae (strain 342).